We begin with the raw amino-acid sequence, 117 residues long: LIM and senescent cell antigen-like-containing domain protein 3 (117 aa).

Residues 70–117 enclose the LIM zinc-binding domain; sequence ATCERCKGGFAPAETIVNSNGELYHEQCFVCAQCFQQFPEGLFYEERT.

Detected in testis.

Its subcellular location is the cytoplasm. This Homo sapiens (Human) protein is LIM and senescent cell antigen-like-containing domain protein 3 (LIMS3).